Reading from the N-terminus, the 264-residue chain is Probable membrane transporter protein HI_0902 (264 aa).

Helical transmembrane passes span 4–24, 28–48, 49–69, 81–101, 107–127, 147–167, 183–203, 210–230, and 243–263; these read FILLCLLVGALAGFLAGLFGI, LVIVPTLVYLLPIVDVPESLL, MSTALGTSFATIVITGIGSAQ, AVRILAPVIMLSVFICGLFIG, ISAKIFACLVVYLATKMVLSI, ILIGMASSAAGIGGGGFIVPF, AFCGMLLGISGMFSFIVSGWG, YSLGYIYLPAVLGITATSFFT, and VSTLKKGFALFLIVVAINMFL.

The protein belongs to the 4-toluene sulfonate uptake permease (TSUP) (TC 2.A.102) family.

Its subcellular location is the cell membrane. This chain is Probable membrane transporter protein HI_0902, found in Haemophilus influenzae (strain ATCC 51907 / DSM 11121 / KW20 / Rd).